Consider the following 359-residue polypeptide: NF-kappa-B inhibitor beta (359 aa).

2 positions are modified to phosphoserine; by RPS6KA1: serine 19 and serine 23. ANK repeat units follow at residues 57–86 (DGDTALHLAVIHQHEPFLDFLLGFSAGTEY), 93–122 (LGQTALHLAAILGEASTVEKLYAAGAGVLV), 126–155 (GGHTALHLACRVRAHTCAYVLLQPRPSHPR), 206–235 (DGHTPLHVAVIHKDAEMVQLLRDAGADLNK), 240–269 (CGRTPLHLAVEGQAAGVLALLLKAGADPTA), and 273–302 (GGRTPLGSALLRPNPVLARLLRAHGAPEPE). The segment at 153 to 192 (HPRDASDTYLTQSQDHTPDTSHAPVATDPQPNPGNEEELR) is disordered. Positions 298-308 (APEPEDKDDKL) are enriched in basic and acidic residues. The tract at residues 298–359 (APEPEDKDDK…KPLPDDPNPA (62 aa)) is disordered. Serine 318 is subject to Phosphoserine. Positions 318–331 (SDSDNRDEGDEYDD) are enriched in acidic residues. Pro residues predominate over residues 342–359 (QPPPSPAAKPLPDDPNPA).

It belongs to the NF-kappa-B inhibitor family. In terms of assembly, interacts with THRB (via ligand-binding domain). Interacts with RELA and REL. Interacts with COMMD1. Interacts with inhibitor kappa B-interacting Ras-like NKIRAS1 and NKIRAS2. Post-translationally, phosphorylated by RPS6KA1; followed by degradation. Interaction with NKIRAS1 and NKIRAS2 probably prevents phosphorylation.

It is found in the cytoplasm. The protein resides in the nucleus. In terms of biological role, inhibits NF-kappa-B by complexing with and trapping it in the cytoplasm. However, the unphosphorylated form resynthesized after cell stimulation is able to bind NF-kappa-B allowing its transport to the nucleus and protecting it to further NFKBIA-dependent inactivation. Association with inhibitor kappa B-interacting NKIRAS1 and NKIRAS2 prevent its phosphorylation rendering it more resistant to degradation, explaining its slower degradation. This chain is NF-kappa-B inhibitor beta (Nfkbib), found in Rattus norvegicus (Rat).